The primary structure comprises 313 residues: 2,3-dihydroxyphenylpropionate/2,3-dihydroxicinnamic acid 1,2-dioxygenase (313 aa).

His115 functions as the Proton donor in the catalytic mechanism. The active-site Proton acceptor is His179.

The protein belongs to the LigB/MhpB extradiol dioxygenase family. Homotetramer. Fe(2+) serves as cofactor.

The enzyme catalyses 3-(2,3-dihydroxyphenyl)propanoate + O2 = (2Z,4E)-2-hydroxy-6-oxonona-2,4-dienedioate + H(+). It catalyses the reaction (2E)-3-(2,3-dihydroxyphenyl)prop-2-enoate + O2 = (2Z,4E,7E)-2-hydroxy-6-oxonona-2,4,7-trienedioate + H(+). Its pathway is aromatic compound metabolism; 3-phenylpropanoate degradation. In terms of biological role, catalyzes the non-heme iron(II)-dependent oxidative cleavage of 2,3-dihydroxyphenylpropionic acid and 2,3-dihydroxicinnamic acid into 2-hydroxy-6-ketononadienedioate and 2-hydroxy-6-ketononatrienedioate, respectively. This chain is 2,3-dihydroxyphenylpropionate/2,3-dihydroxicinnamic acid 1,2-dioxygenase, found in Mycobacterium ulcerans (strain Agy99).